The chain runs to 357 residues: Trans-resveratrol di-O-methyltransferase (357 aa).

The S-adenosyl-L-methionine site is built by G200, D223, D243, M244, and K257. Catalysis depends on H261, which acts as the Proton acceptor.

It belongs to the class I-like SAM-binding methyltransferase superfamily. Cation-independent O-methyltransferase family. COMT subfamily.

The enzyme catalyses trans-resveratrol + 2 S-adenosyl-L-methionine = pterostilbene + 2 S-adenosyl-L-homocysteine + 2 H(+). In terms of biological role, catalyzes the biosynthesis of pterostilbene from resveratrol. Pterostilbene has both antifungal and pharmacological properties. Also has activity toward resveratrol monomethyl ether (RME). The protein is Trans-resveratrol di-O-methyltransferase (ROMT) of Vitis vinifera (Grape).